Here is a 457-residue protein sequence, read N- to C-terminus: Bifunctional protein GlmU (457 aa).

Residues 1–228 form a pyrophosphorylase region; it reads MEELVSVILA…SEEIIGVNSR (228 aa). UDP-N-acetyl-alpha-D-glucosamine-binding positions include 9 to 12, lysine 23, glutamine 73, and 78 to 79; these read LAAG and GT. Residue aspartate 102 participates in Mg(2+) binding. Positions 139, 154, 169, and 226 each coordinate UDP-N-acetyl-alpha-D-glucosamine. Mg(2+) is bound at residue asparagine 226. The interval 229 to 249 is linker; it reads VQLSNAEKVMRRRINEKHMEN. The tract at residues 250–457 is N-acetyltransferase; the sequence is GVTIIDPDST…VEERIKKGRL (208 aa). UDP-N-acetyl-alpha-D-glucosamine contacts are provided by arginine 331 and lysine 349. Histidine 361 acts as the Proton acceptor in catalysis. UDP-N-acetyl-alpha-D-glucosamine contacts are provided by tyrosine 364 and asparagine 375. Acetyl-CoA contacts are provided by residues 384–385, alanine 421, and arginine 438; that span reads NY.

It in the N-terminal section; belongs to the N-acetylglucosamine-1-phosphate uridyltransferase family. The protein in the C-terminal section; belongs to the transferase hexapeptide repeat family. In terms of assembly, homotrimer. It depends on Mg(2+) as a cofactor.

It localises to the cytoplasm. The enzyme catalyses alpha-D-glucosamine 1-phosphate + acetyl-CoA = N-acetyl-alpha-D-glucosamine 1-phosphate + CoA + H(+). It catalyses the reaction N-acetyl-alpha-D-glucosamine 1-phosphate + UTP + H(+) = UDP-N-acetyl-alpha-D-glucosamine + diphosphate. It functions in the pathway nucleotide-sugar biosynthesis; UDP-N-acetyl-alpha-D-glucosamine biosynthesis; N-acetyl-alpha-D-glucosamine 1-phosphate from alpha-D-glucosamine 6-phosphate (route II): step 2/2. The protein operates within nucleotide-sugar biosynthesis; UDP-N-acetyl-alpha-D-glucosamine biosynthesis; UDP-N-acetyl-alpha-D-glucosamine from N-acetyl-alpha-D-glucosamine 1-phosphate: step 1/1. Its pathway is bacterial outer membrane biogenesis; LPS lipid A biosynthesis. In terms of biological role, catalyzes the last two sequential reactions in the de novo biosynthetic pathway for UDP-N-acetylglucosamine (UDP-GlcNAc). The C-terminal domain catalyzes the transfer of acetyl group from acetyl coenzyme A to glucosamine-1-phosphate (GlcN-1-P) to produce N-acetylglucosamine-1-phosphate (GlcNAc-1-P), which is converted into UDP-GlcNAc by the transfer of uridine 5-monophosphate (from uridine 5-triphosphate), a reaction catalyzed by the N-terminal domain. The chain is Bifunctional protein GlmU from Caldanaerobacter subterraneus subsp. tengcongensis (strain DSM 15242 / JCM 11007 / NBRC 100824 / MB4) (Thermoanaerobacter tengcongensis).